The sequence spans 156 residues: 6,7-dimethyl-8-ribityllumazine synthase (156 aa).

Residues phenylalanine 23, alanine 57–glutamate 59, and threonine 81–isoleucine 83 contribute to the 5-amino-6-(D-ribitylamino)uracil site. Position 86–87 (serine 86–threonine 87) interacts with (2S)-2-hydroxy-3-oxobutyl phosphate. Histidine 89 (proton donor) is an active-site residue. Phenylalanine 114 contacts 5-amino-6-(D-ribitylamino)uracil. (2S)-2-hydroxy-3-oxobutyl phosphate is bound at residue arginine 128.

Belongs to the DMRL synthase family. Forms an icosahedral capsid composed of 60 subunits, arranged as a dodecamer of pentamers.

It carries out the reaction (2S)-2-hydroxy-3-oxobutyl phosphate + 5-amino-6-(D-ribitylamino)uracil = 6,7-dimethyl-8-(1-D-ribityl)lumazine + phosphate + 2 H2O + H(+). It participates in cofactor biosynthesis; riboflavin biosynthesis; riboflavin from 2-hydroxy-3-oxobutyl phosphate and 5-amino-6-(D-ribitylamino)uracil: step 1/2. Functionally, catalyzes the formation of 6,7-dimethyl-8-ribityllumazine by condensation of 5-amino-6-(D-ribitylamino)uracil with 3,4-dihydroxy-2-butanone 4-phosphate. This is the penultimate step in the biosynthesis of riboflavin. This chain is 6,7-dimethyl-8-ribityllumazine synthase, found in Shouchella clausii (strain KSM-K16) (Alkalihalobacillus clausii).